The primary structure comprises 107 residues: Nucleoid-associated protein Oant_0022 (107 aa).

The protein belongs to the YbaB/EbfC family. In terms of assembly, homodimer.

Its subcellular location is the cytoplasm. It localises to the nucleoid. Binds to DNA and alters its conformation. May be involved in regulation of gene expression, nucleoid organization and DNA protection. The protein is Nucleoid-associated protein Oant_0022 of Brucella anthropi (strain ATCC 49188 / DSM 6882 / CCUG 24695 / JCM 21032 / LMG 3331 / NBRC 15819 / NCTC 12168 / Alc 37) (Ochrobactrum anthropi).